Reading from the N-terminus, the 256-residue chain is Distal membrane-arm assembly complex protein 2 (256 aa).

S252 carries the phosphoserine modification.

The protein belongs to the ATP synthase subunit s family. As to quaternary structure, interacts with incompletely assembled mitochondrial NADH:ubiquinone oxidoreductase complex (complex I).

The protein localises to the mitochondrion. Functionally, required for the assembly of the mitochondrial NADH:ubiquinone oxidoreductase complex (complex I). Involved in the assembly of the distal region of complex I. This chain is Distal membrane-arm assembly complex protein 2, found in Macaca fascicularis (Crab-eating macaque).